The primary structure comprises 195 residues: Dephospho-CoA kinase (195 aa).

The region spanning isoleucine 2–threonine 195 is the DPCK domain. Glycine 10 to phenylalanine 15 serves as a coordination point for ATP.

The protein belongs to the CoaE family.

The protein localises to the cytoplasm. The enzyme catalyses 3'-dephospho-CoA + ATP = ADP + CoA + H(+). It functions in the pathway cofactor biosynthesis; coenzyme A biosynthesis; CoA from (R)-pantothenate: step 5/5. Catalyzes the phosphorylation of the 3'-hydroxyl group of dephosphocoenzyme A to form coenzyme A. The chain is Dephospho-CoA kinase from Wolbachia pipientis wMel.